The primary structure comprises 547 residues: Chaperonin GroEL (547 aa).

Residues 29–32 (TMGP), Lys50, 86–90 (DGTTT), Gly414, 477–479 (NAA), and Asp493 each bind ATP.

It belongs to the chaperonin (HSP60) family. As to quaternary structure, forms a cylinder of 14 subunits composed of two heptameric rings stacked back-to-back. Interacts with the co-chaperonin GroES.

It localises to the cytoplasm. It catalyses the reaction ATP + H2O + a folded polypeptide = ADP + phosphate + an unfolded polypeptide.. Together with its co-chaperonin GroES, plays an essential role in assisting protein folding. The GroEL-GroES system forms a nano-cage that allows encapsulation of the non-native substrate proteins and provides a physical environment optimized to promote and accelerate protein folding. This chain is Chaperonin GroEL, found in Campylobacter rectus (Wolinella recta).